Reading from the N-terminus, the 218-residue chain is Thiamine-phosphate synthase (218 aa).

4-amino-2-methyl-5-(diphosphooxymethyl)pyrimidine-binding positions include 45–49 and Asn77; that span reads QYREK. Asp78 and Asp97 together coordinate Mg(2+). Residue Ser116 coordinates 4-amino-2-methyl-5-(diphosphooxymethyl)pyrimidine. 2-[(2R,5Z)-2-carboxy-4-methylthiazol-5(2H)-ylidene]ethyl phosphate is bound at residue 142 to 144; that stretch reads TKT. Position 145 (Lys145) interacts with 4-amino-2-methyl-5-(diphosphooxymethyl)pyrimidine. 2-[(2R,5Z)-2-carboxy-4-methylthiazol-5(2H)-ylidene]ethyl phosphate contacts are provided by residues Gly173 and 193 to 194; that span reads VT.

This sequence belongs to the thiamine-phosphate synthase family. Requires Mg(2+) as cofactor.

It catalyses the reaction 2-[(2R,5Z)-2-carboxy-4-methylthiazol-5(2H)-ylidene]ethyl phosphate + 4-amino-2-methyl-5-(diphosphooxymethyl)pyrimidine + 2 H(+) = thiamine phosphate + CO2 + diphosphate. It carries out the reaction 2-(2-carboxy-4-methylthiazol-5-yl)ethyl phosphate + 4-amino-2-methyl-5-(diphosphooxymethyl)pyrimidine + 2 H(+) = thiamine phosphate + CO2 + diphosphate. The enzyme catalyses 4-methyl-5-(2-phosphooxyethyl)-thiazole + 4-amino-2-methyl-5-(diphosphooxymethyl)pyrimidine + H(+) = thiamine phosphate + diphosphate. The protein operates within cofactor biosynthesis; thiamine diphosphate biosynthesis; thiamine phosphate from 4-amino-2-methyl-5-diphosphomethylpyrimidine and 4-methyl-5-(2-phosphoethyl)-thiazole: step 1/1. Condenses 4-methyl-5-(beta-hydroxyethyl)thiazole monophosphate (THZ-P) and 2-methyl-4-amino-5-hydroxymethyl pyrimidine pyrophosphate (HMP-PP) to form thiamine monophosphate (TMP). In Pelotomaculum thermopropionicum (strain DSM 13744 / JCM 10971 / SI), this protein is Thiamine-phosphate synthase.